We begin with the raw amino-acid sequence, 315 residues long: CID domain-containing protein 1 (315 aa).

The 135-residue stretch at 1–135 (MADFTEQTLR…RLHEVHQQVK (135 aa)) folds into the CID domain. Residues 227–273 (MLEEYVKRLKNETNERETLESNLNMLIENVRMSIEHHEKLCREVKRR) are a coiled coil.

The chain is CID domain-containing protein 1 (cids-1) from Caenorhabditis elegans.